Consider the following 626-residue polypeptide: DNA polymerase 2 (626 aa).

It belongs to the DNA polymerase type-B family.

It carries out the reaction DNA(n) + a 2'-deoxyribonucleoside 5'-triphosphate = DNA(n+1) + diphosphate. In terms of biological role, this polymerase is devoid of exonuclease activity. The chain is DNA polymerase 2 (dpo2) from Saccharolobus solfataricus (strain ATCC 35092 / DSM 1617 / JCM 11322 / P2) (Sulfolobus solfataricus).